The sequence spans 193 residues: Large ribosomal subunit protein uL18 (193 aa).

It belongs to the universal ribosomal protein uL18 family. As to quaternary structure, part of the 50S ribosomal subunit. Contacts the 5S and 23S rRNAs.

Its function is as follows. This is one of the proteins that bind and probably mediate the attachment of the 5S RNA into the large ribosomal subunit, where it forms part of the central protuberance. This is Large ribosomal subunit protein uL18 from Methanobrevibacter smithii (strain ATCC 35061 / DSM 861 / OCM 144 / PS).